The primary structure comprises 593 residues: Proline--tRNA ligase (593 aa).

It belongs to the class-II aminoacyl-tRNA synthetase family. ProS type 1 subfamily. In terms of assembly, homodimer.

The protein localises to the cytoplasm. The enzyme catalyses tRNA(Pro) + L-proline + ATP = L-prolyl-tRNA(Pro) + AMP + diphosphate. Catalyzes the attachment of proline to tRNA(Pro) in a two-step reaction: proline is first activated by ATP to form Pro-AMP and then transferred to the acceptor end of tRNA(Pro). As ProRS can inadvertently accommodate and process non-cognate amino acids such as alanine and cysteine, to avoid such errors it has two additional distinct editing activities against alanine. One activity is designated as 'pretransfer' editing and involves the tRNA(Pro)-independent hydrolysis of activated Ala-AMP. The other activity is designated 'posttransfer' editing and involves deacylation of mischarged Ala-tRNA(Pro). The misacylated Cys-tRNA(Pro) is not edited by ProRS. This chain is Proline--tRNA ligase, found in Synechococcus sp. (strain CC9902).